A 149-amino-acid polypeptide reads, in one-letter code: Probable flagellum biosynthesis repressor protein FlbT (149 aa).

This sequence belongs to the FlbT family.

Its function is as follows. Has a post-transcriptional repressor function in flagellum biogenesis. Associates with the 5'-UTR of fljK mRNA and promotes its degradation. The polypeptide is Probable flagellum biosynthesis repressor protein FlbT (Allorhizobium ampelinum (strain ATCC BAA-846 / DSM 112012 / S4) (Agrobacterium vitis (strain S4))).